An 88-amino-acid polypeptide reads, in one-letter code: Small ribosomal subunit protein uS17 (88 aa).

It belongs to the universal ribosomal protein uS17 family. In terms of assembly, part of the 30S ribosomal subunit.

One of the primary rRNA binding proteins, it binds specifically to the 5'-end of 16S ribosomal RNA. The polypeptide is Small ribosomal subunit protein uS17 (Pseudomonas entomophila (strain L48)).